A 347-amino-acid chain; its full sequence is Glycerol-1-phosphate dehydrogenase [NAD(P)+] (347 aa).

NAD(+) contacts are provided by residues 94–98 (GKVID) and 116–119 (TAAS). Aspartate 121 provides a ligand contact to substrate. Serine 125 contacts NAD(+). Aspartate 168 serves as a coordination point for substrate. 2 residues coordinate Zn(2+): aspartate 168 and histidine 248. Histidine 252 contributes to the substrate binding site. Histidine 264 serves as a coordination point for Zn(2+).

This sequence belongs to the glycerol-1-phosphate dehydrogenase family. Homooctamer. Requires Zn(2+) as cofactor.

It localises to the cytoplasm. The enzyme catalyses sn-glycerol 1-phosphate + NAD(+) = dihydroxyacetone phosphate + NADH + H(+). The catalysed reaction is sn-glycerol 1-phosphate + NADP(+) = dihydroxyacetone phosphate + NADPH + H(+). The protein operates within membrane lipid metabolism; glycerophospholipid metabolism. Its activity is regulated as follows. Partially inhibited by divalent metal cations such as Co(2+), Cu(2+) and Ni(2+). Functionally, catalyzes the NAD(P)H-dependent reduction of dihydroxyacetonephosphate (DHAP or glycerone phosphate) to glycerol 1-phosphate (G1P). The G1P thus generated is used as the glycerophosphate backbone of phospholipids in the cellular membranes of Archaea. Is also able to catalyze the reverse reaction, i.e. the NAD(P)(+)-dependent oxidation of G1P but not of G3P. Is not active toward glycerol, dihydroxyacetone, glyceraldehyde-3-phosphate, glyceraldehyde and glycerol-2-phosphate. In Methanothermobacter thermautotrophicus (strain ATCC 29096 / DSM 1053 / JCM 10044 / NBRC 100330 / Delta H) (Methanobacterium thermoautotrophicum), this protein is Glycerol-1-phosphate dehydrogenase [NAD(P)+] (egsA).